We begin with the raw amino-acid sequence, 61 residues long: Short neurotoxin 1 (61 aa).

A compositionally biased stretch (polar residues) spans 1 to 16 (LECHNQQSSQPPTTKS). The tract at residues 1 to 20 (LECHNQQSSQPPTTKSCPGD) is disordered. 4 cysteine pairs are disulfide-bonded: cysteine 3/cysteine 23, cysteine 17/cysteine 40, cysteine 42/cysteine 53, and cysteine 54/cysteine 59.

This sequence belongs to the three-finger toxin family. Short-chain subfamily. Type I alpha-neurotoxin sub-subfamily. Expressed by the venom gland.

Its subcellular location is the secreted. Binds to muscle nicotinic acetylcholine receptor (nAChR) and inhibit acetylcholine from binding to the receptor, thereby impairing neuromuscular transmission. This Hemachatus haemachatus (Rinkhals) protein is Short neurotoxin 1.